Reading from the N-terminus, the 179-residue chain is Inner membrane-spanning protein YciB (179 aa).

5 consecutive transmembrane segments (helical) span residues 22–42 (IYAATSALIVATAIVLIYSWV), 50–70 (MALITFVLVAVFGGLTLFFHN), 76–96 (WKVTVIYALFAGALLISQWVM), 121–141 (LAWALFFIVCGLANIYIAFWL), and 149–169 (FKVFGLTALTLIFTLLSGVYI).

It belongs to the YciB family.

It is found in the cell inner membrane. Functionally, plays a role in cell envelope biogenesis, maintenance of cell envelope integrity and membrane homeostasis. This Salmonella dublin (strain CT_02021853) protein is Inner membrane-spanning protein YciB.